The sequence spans 94 residues: Aspartyl/glutamyl-tRNA(Asn/Gln) amidotransferase subunit C (94 aa).

This sequence belongs to the GatC family. Heterotrimer of A, B and C subunits.

It carries out the reaction L-glutamyl-tRNA(Gln) + L-glutamine + ATP + H2O = L-glutaminyl-tRNA(Gln) + L-glutamate + ADP + phosphate + H(+). The enzyme catalyses L-aspartyl-tRNA(Asn) + L-glutamine + ATP + H2O = L-asparaginyl-tRNA(Asn) + L-glutamate + ADP + phosphate + 2 H(+). Its function is as follows. Allows the formation of correctly charged Asn-tRNA(Asn) or Gln-tRNA(Gln) through the transamidation of misacylated Asp-tRNA(Asn) or Glu-tRNA(Gln) in organisms which lack either or both of asparaginyl-tRNA or glutaminyl-tRNA synthetases. The reaction takes place in the presence of glutamine and ATP through an activated phospho-Asp-tRNA(Asn) or phospho-Glu-tRNA(Gln). This chain is Aspartyl/glutamyl-tRNA(Asn/Gln) amidotransferase subunit C, found in Nitratidesulfovibrio vulgaris (strain ATCC 29579 / DSM 644 / CCUG 34227 / NCIMB 8303 / VKM B-1760 / Hildenborough) (Desulfovibrio vulgaris).